The sequence spans 257 residues: 1-(5-phosphoribosyl)-5-[(5-phosphoribosylamino)methylideneamino] imidazole-4-carboxamide isomerase (257 aa).

The active-site Proton acceptor is D8. The active-site Proton donor is the D129.

Belongs to the HisA/HisF family.

It is found in the cytoplasm. It carries out the reaction 1-(5-phospho-beta-D-ribosyl)-5-[(5-phospho-beta-D-ribosylamino)methylideneamino]imidazole-4-carboxamide = 5-[(5-phospho-1-deoxy-D-ribulos-1-ylimino)methylamino]-1-(5-phospho-beta-D-ribosyl)imidazole-4-carboxamide. The protein operates within amino-acid biosynthesis; L-histidine biosynthesis; L-histidine from 5-phospho-alpha-D-ribose 1-diphosphate: step 4/9. In Trichodesmium erythraeum (strain IMS101), this protein is 1-(5-phosphoribosyl)-5-[(5-phosphoribosylamino)methylideneamino] imidazole-4-carboxamide isomerase.